The sequence spans 107 residues: Thioredoxin (107 aa).

Positions 2 to 107 (AGVLKNVTDD…ALLRPGPVPR (106 aa)) constitute a Thioredoxin domain. Residues C33 and C36 are joined by a disulfide bond.

It belongs to the thioredoxin family.

Component of the thioredoxin-thioredoxin reductase system. Participates in various redox reactions through the reversible oxidation of its active center dithiol to a disulfide and catalyzes dithiol-disulfide exchange reactions. The polypeptide is Thioredoxin (trxA) (Streptomyces clavuligerus).